We begin with the raw amino-acid sequence, 193 residues long: Bcl-2-like protein 2 (193 aa).

Residue alanine 2 is modified to N-acetylalanine. A BH4 motif is present at residues 9-29 (DTRALVADFVGYKLRQKGYVC). The BH1 signature appears at 85–104 (ELFQGGPNWGRLVAFFVFGA). The BH2 signature appears at 136 to 151 (DWIHSSGGWAEFTALY). At alanine 177 the chain carries Phosphoserine.

The protein belongs to the Bcl-2 family. Interacts with HIF3A (via C-terminus domain). Interacts with BOP. In terms of tissue distribution, expressed (at protein level) in a wide range of tissues with highest levels in brain, spinal cord, testis, pancreas, heart, spleen and mammary glands. Moderate levels found in thymus, ovary and small intestine. Not detected in salivary gland, muscle or liver. Also expressed in cell lines of myeloid, fibroblast and epithelial origin. Not detected in most lymphoid cell lines.

It is found in the mitochondrion membrane. Functionally, promotes cell survival. Blocks dexamethasone-induced apoptosis. Mediates survival of postmitotic Sertoli cells by suppressing death-promoting activity of BAX. The chain is Bcl-2-like protein 2 (BCL2L2) from Homo sapiens (Human).